Reading from the N-terminus, the 244-residue chain is tRNA (guanine-N(1)-)-methyltransferase (244 aa).

Residues glycine 110 and 129–134 contribute to the S-adenosyl-L-methionine site; that span reads IGDYIL.

It belongs to the RNA methyltransferase TrmD family. As to quaternary structure, homodimer.

Its subcellular location is the cytoplasm. The enzyme catalyses guanosine(37) in tRNA + S-adenosyl-L-methionine = N(1)-methylguanosine(37) in tRNA + S-adenosyl-L-homocysteine + H(+). Specifically methylates guanosine-37 in various tRNAs. This chain is tRNA (guanine-N(1)-)-methyltransferase, found in Syntrophomonas wolfei subsp. wolfei (strain DSM 2245B / Goettingen).